The sequence spans 1062 residues: Carbamoyl phosphate synthase large chain (1062 aa).

The interval 1–401 is carboxyphosphate synthetic domain; the sequence is MPKRTDIHKI…AMQKAVRSLE (401 aa). R129, R169, G175, G176, K208, I210, E215, G241, I242, H243, Q284, and E298 together coordinate ATP. Residues 133–327 enclose the ATP-grasp 1 domain; sequence KELCKELGEP…IAKMAAKIAI (195 aa). Positions 284, 298, and 300 each coordinate Mg(2+). Residues Q284, E298, and N300 each coordinate Mn(2+). Residues 402–546 form an oligomerization domain region; it reads IDEKDLYSET…YSTYDGENES (145 aa). The interval 547–929 is carbamoyl phosphate synthetic domain; the sequence is HKSGKKSVIV…ALYKAFAGAK (383 aa). The region spanning 671 to 861 is the ATP-grasp 2 domain; the sequence is DQIIKKLKLN…MAQVATRVIM (191 aa). Residues R707, D746, L748, E752, G777, V778, H779, S780, Q820, and E832 each coordinate ATP. Residues Q820, E832, and N834 each coordinate Mg(2+). Mn(2+)-binding residues include Q820, E832, and N834. The MGS-like domain maps to 930–1062; that stretch reads MQLPENGNVL…NRSFATDALK (133 aa). The interval 930 to 1062 is allosteric domain; the sequence is MQLPENGNVL…NRSFATDALK (133 aa).

This sequence belongs to the CarB family. As to quaternary structure, composed of two chains; the small (or glutamine) chain promotes the hydrolysis of glutamine to ammonia, which is used by the large (or ammonia) chain to synthesize carbamoyl phosphate. Tetramer of heterodimers (alpha,beta)4. Mg(2+) serves as cofactor. Requires Mn(2+) as cofactor.

It catalyses the reaction hydrogencarbonate + L-glutamine + 2 ATP + H2O = carbamoyl phosphate + L-glutamate + 2 ADP + phosphate + 2 H(+). The catalysed reaction is hydrogencarbonate + NH4(+) + 2 ATP = carbamoyl phosphate + 2 ADP + phosphate + 2 H(+). The protein operates within amino-acid biosynthesis; L-arginine biosynthesis; carbamoyl phosphate from bicarbonate: step 1/1. It functions in the pathway pyrimidine metabolism; UMP biosynthesis via de novo pathway; (S)-dihydroorotate from bicarbonate: step 1/3. Large subunit of the glutamine-dependent carbamoyl phosphate synthetase (CPSase). CPSase catalyzes the formation of carbamoyl phosphate from the ammonia moiety of glutamine, carbonate, and phosphate donated by ATP, constituting the first step of 2 biosynthetic pathways, one leading to arginine and/or urea and the other to pyrimidine nucleotides. The large subunit (synthetase) binds the substrates ammonia (free or transferred from glutamine from the small subunit), hydrogencarbonate and ATP and carries out an ATP-coupled ligase reaction, activating hydrogencarbonate by forming carboxy phosphate which reacts with ammonia to form carbamoyl phosphate. This Lactobacillus johnsonii (strain CNCM I-12250 / La1 / NCC 533) protein is Carbamoyl phosphate synthase large chain.